Consider the following 84-residue polypeptide: Small ribosomal subunit protein uS17 (84 aa).

Belongs to the universal ribosomal protein uS17 family. Part of the 30S ribosomal subunit.

One of the primary rRNA binding proteins, it binds specifically to the 5'-end of 16S ribosomal RNA. The polypeptide is Small ribosomal subunit protein uS17 (Blochmanniella pennsylvanica (strain BPEN)).